Consider the following 338-residue polypeptide: MTRTITPSITDDDALIEATLRPRALDDYVGQEKAKGNLRIFIDAARGRDEALDHVLLYGPPGLGKTTLANIIACEMGVNIKSTSGPVIERPGDLAAILTNLEAHDVLFIDEIHRLSHVVEEILYPAMEDFQLDIIIGQGPSARTIKLDLPKFTLVGATTRAGLLSSPLRDRFGVISRLEFYTDEELAFIITRSARILGMEIKTDGAAEMARRSRGTPRIANRLLRRVRDFAQVKADGVITMKVVQDALALLEIDEMGFDQMDRMILLTIIDKFGGGPVGLDTIAAAISEESDTIEDVYEPFLIQNGFLNRTPRGRVATKAAYLHFGRIVPEPPQGKLF.

Residues 1 to 181 form a large ATPase domain (RuvB-L) region; the sequence is MTRTITPSIT…FGVISRLEFY (181 aa). Residues L20, R21, G62, K65, T66, T67, 128–130, R171, Y181, and R218 contribute to the ATP site; that span reads EDF. Mg(2+) is bound at residue T66. Residues 182-252 form a small ATPAse domain (RuvB-S) region; it reads TDEELAFIIT…VVQDALALLE (71 aa). A head domain (RuvB-H) region spans residues 255–338; that stretch reads EMGFDQMDRM…VPEPPQGKLF (84 aa). 2 residues coordinate DNA: R310 and R315.

This sequence belongs to the RuvB family. Homohexamer. Forms an RuvA(8)-RuvB(12)-Holliday junction (HJ) complex. HJ DNA is sandwiched between 2 RuvA tetramers; dsDNA enters through RuvA and exits via RuvB. An RuvB hexamer assembles on each DNA strand where it exits the tetramer. Each RuvB hexamer is contacted by two RuvA subunits (via domain III) on 2 adjacent RuvB subunits; this complex drives branch migration. In the full resolvosome a probable DNA-RuvA(4)-RuvB(12)-RuvC(2) complex forms which resolves the HJ.

The protein resides in the cytoplasm. It carries out the reaction ATP + H2O = ADP + phosphate + H(+). In terms of biological role, the RuvA-RuvB-RuvC complex processes Holliday junction (HJ) DNA during genetic recombination and DNA repair, while the RuvA-RuvB complex plays an important role in the rescue of blocked DNA replication forks via replication fork reversal (RFR). RuvA specifically binds to HJ cruciform DNA, conferring on it an open structure. The RuvB hexamer acts as an ATP-dependent pump, pulling dsDNA into and through the RuvAB complex. RuvB forms 2 homohexamers on either side of HJ DNA bound by 1 or 2 RuvA tetramers; 4 subunits per hexamer contact DNA at a time. Coordinated motions by a converter formed by DNA-disengaged RuvB subunits stimulates ATP hydrolysis and nucleotide exchange. Immobilization of the converter enables RuvB to convert the ATP-contained energy into a lever motion, pulling 2 nucleotides of DNA out of the RuvA tetramer per ATP hydrolyzed, thus driving DNA branch migration. The RuvB motors rotate together with the DNA substrate, which together with the progressing nucleotide cycle form the mechanistic basis for DNA recombination by continuous HJ branch migration. Branch migration allows RuvC to scan DNA until it finds its consensus sequence, where it cleaves and resolves cruciform DNA. The sequence is that of Holliday junction branch migration complex subunit RuvB from Geotalea uraniireducens (strain Rf4) (Geobacter uraniireducens).